A 328-amino-acid polypeptide reads, in one-letter code: Malate dehydrogenase (328 aa).

12–18 (GAAGQIG) serves as a coordination point for NAD(+). Arg-92 and Arg-98 together coordinate substrate. Residues Asn-105, Gln-112, and 129 to 131 (TGN) contribute to the NAD(+) site. Positions 131 and 162 each coordinate substrate. His-187 functions as the Proton acceptor in the catalytic mechanism.

It belongs to the LDH/MDH superfamily. MDH type 2 family.

It catalyses the reaction (S)-malate + NAD(+) = oxaloacetate + NADH + H(+). Functionally, catalyzes the reversible oxidation of malate to oxaloacetate. The protein is Malate dehydrogenase of Nocardioides sp. (strain ATCC BAA-499 / JS614).